The primary structure comprises 695 residues: Exocyst complex component EXO70C2 (695 aa).

The segment covering 1-36 (MEKNDKDPDHDDKSKGDEKGDVVSDAHPSDDAHHQD) has biased composition (basic and acidic residues). Disordered regions lie at residues 1 to 71 (MEKN…EEAP) and 210 to 229 (VVTDDSNSQRRSTADQQDHQ). The residue at position 212 (Thr212) is a Phosphothreonine. 2 positions are modified to phosphoserine: Ser215 and Ser217. Thr446 is modified (phosphothreonine). Ser494 and Ser605 each carry phosphoserine.

This sequence belongs to the EXO70 family. Interacts with ROH1A and ROH1D independently of its phosphorylation status. Post-translationally, phosphorylation on Ser and Thr residues promotes its ability to repress pollen tube growth and to regulate cellular architecture at the pollen tube tip. Expressed in anthers, pollen and root trichoblast cells. Also observed in anther tapetum.

The protein resides in the cytoplasm. Required for optimal tip growth of pollen tube; dose-dependent negative regulator of exocyst function in pollen tube growth and cellular architecture at the pollen tube tip, probably by modulating membrane trafficking and exocytosis dynamics. This chain is Exocyst complex component EXO70C2, found in Arabidopsis thaliana (Mouse-ear cress).